Here is a 927-residue protein sequence, read N- to C-terminus: Band 3 anion transport protein (927 aa).

Position 1 is an N-acetylmethionine (methionine 1). The Cytoplasmic segment spans residues 1–420 (MGDMQDHEKV…LSDITDALSP (420 aa)). Serine 18 bears the Phosphoserine mark. A phosphotyrosine mark is found at tyrosine 31 and tyrosine 56. The tract at residues 69–303 (SQVYVELQEL…LGRAAATLMT (235 aa)) is globular. Residues 190-199 (AVLTRSGAPS) form an interaction with ANK1 region. Serine 199 and serine 222 each carry phosphoserine. The dimerization arm stretch occupies residues 317-370 (RGELLSSLDSFLDCSLVLPPTEAPSEKALLNLVPVQKELLRKRYLPRPAKPDPN). The tract at residues 367–390 (PDPNLYEALDGGKEGPGDEDDPLR) is disordered. The residue at position 372 (tyrosine 372) is a Phosphotyrosine. A helical membrane pass occupies residues 421-444 (QVLAAVIFIYFAALSPAVTFGGLL). Topologically, residues 445-452 (GEKTRNLM) are extracellular. A helical transmembrane segment spans residues 453–473 (GVSELLISTAVQGILFALLGA). The Cytoplasmic portion of the chain corresponds to 474 to 476 (QPL). Residues 477 to 493 (LVLGFSGPLLVFEEAFY) form a discontinuously helical membrane-spanning segment. The Extracellular portion of the chain corresponds to 494–502 (SFCESNNLE). A helical transmembrane segment spans residues 503-523 (YIVGRAWIGFWLILLVVLVVA). At 524–535 (FEGSFLVQYISR) the chain is on the cytoplasmic side. Residues 536 to 558 (YTQEIFSFLISLIFIYETFSKLI) traverse the membrane as a helical segment. At 559–586 (KIFQDYPLQESYAPVVMKPKPQGPVPNT) the chain is on the extracellular side. The helical transmembrane segment at 587-607 (ALLSLVLMVGTFLLAMMLRKF) threads the bilayer. Residues 608-618 (KNSTYFPGKLR) are Cytoplasmic-facing. Residues 619–639 (RVIGDFGVPISILIMVLVDTF) traverse the membrane as a helical segment. Residues 640–679 (IKNTYTQKLSVPDGLKVSNSSARGWVIHPLGLYNHFPKWM) lie on the Extracellular side of the membrane. N-linked (GlcNAc...) asparagine glycosylation occurs at asparagine 658. A helical transmembrane segment spans residues 680–700 (MFASVLPALLVFILIFLESQI). Residues 701-716 (TTLIVSKPERKMIKGS) lie on the Cytoplasmic side of the membrane. The helical transmembrane segment at 717–735 (GFHLDLLLVVGMGGVAALF) threads the bilayer. Residues 736–753 (GMPWLSATTVRSVTHANA) form a discontinuously helical membrane-spanning segment. The Cytoplasmic portion of the chain corresponds to 754–776 (LTVMGKASGPGAAAQIQEVKEQR). The next 2 membrane-spanning stretches (helical) occupy residues 777–797 (ISGLLVSVLVGLSILMEPILS) and 798–816 (RIPLAVLFGIFLYMGITSL). At 817–854 (SGIQLFDRILLLFKPPKYHPDVPFVKRVKTWRMHLFTG) the chain is on the cytoplasmic side. Positions 855–885 (IQIICLAVLWVVKSTPASLALPFVLILTVPL) form an intramembrane region, discontinuously helical. A lipid anchor (S-palmitoyl cysteine) is attached at cysteine 859. Topologically, residues 886-927 (RRLLLPLIFRELELQCLDGDDAKVTFDEAEGLDEYDEVPMPV) are cytoplasmic. Tyrosine 920 is modified (phosphotyrosine).

It belongs to the anion exchanger (TC 2.A.31) family. A dimer in solution, but in its membrane environment, it exists primarily as a mixture of dimers and tetramers and spans the membrane asymmetrically. Component of the ankyrin-1 complex in the erythrocyte, composed of ANK1, RHCE, RHAG, SLC4A1, EPB42, GYPA, GYPB and AQP1. Interacts with STOM; this interaction positively regulates SLC4A1 activity. Interacts with GYPA; a GYPA monomer is bound at each end of the SLC4A1 dimer forming a heterotetramer. Three SLC4A1 dimers (Band 3-I, Band 3-II and Band 3-III) participates in the ankyrin-1 complex. Interacts (via the cytoplasmic domain) with EPB42; this interaction is mediated by the SLC4A1 Band 3-I dimer. Interacts (via the cytoplasmic domain) directly with ANK1; this interaction is mediated by the SLC4A1 Band 3-II and Band 3-III dimers. As to quaternary structure, interacts with TMEM139. Kidney.

Its subcellular location is the cell membrane. It localises to the basolateral cell membrane. The catalysed reaction is hydrogencarbonate(in) + chloride(out) = hydrogencarbonate(out) + chloride(in). Its function is as follows. Functions both as a transporter that mediates electroneutral anion exchange across the cell membrane and as a structural protein. Component of the ankyrin-1 complex of the erythrocyte membrane; required for normal flexibility and stability of the erythrocyte membrane and for normal erythrocyte shape via the interactions of its cytoplasmic domain with cytoskeletal proteins, glycolytic enzymes, and hemoglobin. Functions as a transporter that mediates the 1:1 exchange of inorganic anions across the erythrocyte membrane. Mediates chloride-bicarbonate exchange in the kidney, and is required for normal acidification of the urine. The chain is Band 3 anion transport protein from Rattus norvegicus (Rat).